Reading from the N-terminus, the 388-residue chain is Homeobox protein XHOX-3 (388 aa).

Disordered regions lie at residues 30–109 (AVGS…SDFY) and 131–163 (SAGQ…FSAC). Polar residues-rich tracts occupy residues 68–81 (ATGQ…QLRI) and 91–103 (DSLS…SSSD). The homeobox DNA-binding region spans 168 to 227 (MRRYRTAFTREQIARLEKEFYRENYVSRPRRCELAAALNLPETTIKVWFQNRRMKDKRQR).

It belongs to the even-skipped homeobox family.

Its subcellular location is the nucleus. In terms of biological role, may be required for posterior development and development of normal embryonic axial pattern. The chain is Homeobox protein XHOX-3 (xhox3) from Xenopus laevis (African clawed frog).